A 396-amino-acid polypeptide reads, in one-letter code: Tryptophan synthase beta chain (396 aa).

An N6-(pyridoxal phosphate)lysine modification is found at Lys88.

This sequence belongs to the TrpB family. In terms of assembly, tetramer of two alpha and two beta chains. The cofactor is pyridoxal 5'-phosphate.

The enzyme catalyses (1S,2R)-1-C-(indol-3-yl)glycerol 3-phosphate + L-serine = D-glyceraldehyde 3-phosphate + L-tryptophan + H2O. Its pathway is amino-acid biosynthesis; L-tryptophan biosynthesis; L-tryptophan from chorismate: step 5/5. Functionally, the beta subunit is responsible for the synthesis of L-tryptophan from indole and L-serine. In Shewanella sp. (strain MR-7), this protein is Tryptophan synthase beta chain.